The primary structure comprises 764 residues: 5-methyltetrahydropteroyltriglutamate--homocysteine methyltransferase (764 aa).

5-methyltetrahydropteroyltri-L-glutamate is bound by residues 16–19 (RELK) and K117. L-homocysteine is bound by residues 442 to 444 (IGS) and E495. L-methionine-binding positions include 442-444 (IGS) and E495. 5-methyltetrahydropteroyltri-L-glutamate contacts are provided by residues 526–527 (RC) and W572. D610 lines the L-homocysteine pocket. D610 contacts L-methionine. E616 provides a ligand contact to 5-methyltetrahydropteroyltri-L-glutamate. 3 residues coordinate Zn(2+): H652, C654, and E676. H705 serves as the catalytic Proton donor. C737 contributes to the Zn(2+) binding site.

This sequence belongs to the vitamin-B12 independent methionine synthase family. The cofactor is Zn(2+).

The catalysed reaction is 5-methyltetrahydropteroyltri-L-glutamate + L-homocysteine = tetrahydropteroyltri-L-glutamate + L-methionine. It participates in amino-acid biosynthesis; L-methionine biosynthesis via de novo pathway; L-methionine from L-homocysteine (MetE route): step 1/1. Functionally, catalyzes the transfer of a methyl group from 5-methyltetrahydrofolate to homocysteine resulting in methionine formation. The sequence is that of 5-methyltetrahydropteroyltriglutamate--homocysteine methyltransferase from Bordetella petrii (strain ATCC BAA-461 / DSM 12804 / CCUG 43448).